The primary structure comprises 1465 residues: Protein clueless (1465 aa).

Residues 1-87 (MALEIDAKNA…SNGHSENGDA (87 aa)) are disordered. A compositionally biased stretch (low complexity) spans 30–51 (HNNNNNAPAAGEKNLVNGSSAA). Residues 52–61 (TKKKGKKNRN) are compositionally biased toward basic residues. Position 273 is a phosphoserine (Ser273). Residues 427-669 (RAEDAFSSKL…RTFPPDVNFL (243 aa)) enclose the Clu domain. Basic and acidic residues predominate over residues 742–767 (AEKQEEPNEEQPEKTEEQPAEKEESK). Disordered stretches follow at residues 742–776 (AEKQ…TKSA) and 962–1021 (VSSD…SNSD). Residues 970–986 (KQPRNNSGKHNKHKAAK) show a composition bias toward basic residues. Composition is skewed to low complexity over residues 987–1003 (ASKP…ATAA) and 1010–1020 (ATTSGATSSNS). TPR repeat units lie at residues 1114-1147 (AYNF…LNNV), 1240-1273 (ALID…NLKY), and 1275-1308 (GNKA…EKET). The segment at 1428 to 1465 (NNNDNASETEQPKDEASAAGTPTQLTNGSEESTATVSS) is disordered. Positions 1447–1465 (GTPTQLTNGSEESTATVSS) are enriched in polar residues.

The protein belongs to the CLU family.

The protein localises to the cytoplasm. MRNA-binding protein involved in proper cytoplasmic distribution of mitochondria. This is Protein clueless from Drosophila virilis (Fruit fly).